We begin with the raw amino-acid sequence, 582 residues long: ATP-dependent lipid A-core flippase (582 aa).

A run of 5 helical transmembrane segments spans residues 16–36 (LWPM…ALIL), 63–83 (ILVW…VSGF), 153–173 (IIGL…ILVV), 253–273 (PLIQ…ASFP), and 275–295 (VMET…IALM). Positions 28–310 (IVAAIALILN…LTNVNAQFQR (283 aa)) constitute an ABC transmembrane type-1 domain. One can recognise an ABC transporter domain in the interval 342–578 (IAFDHVTFSY…QGVYAQLHQL (237 aa)). 376-383 (GRSGSGKS) contributes to the ATP binding site.

This sequence belongs to the ABC transporter superfamily. Lipid exporter (TC 3.A.1.106) family. In terms of assembly, homodimer.

Its subcellular location is the cell inner membrane. It carries out the reaction ATP + H2O + lipid A-core oligosaccharideSide 1 = ADP + phosphate + lipid A-core oligosaccharideSide 2.. Involved in lipopolysaccharide (LPS) biosynthesis. Translocates lipid A-core from the inner to the outer leaflet of the inner membrane. Transmembrane domains (TMD) form a pore in the inner membrane and the ATP-binding domain (NBD) is responsible for energy generation. The protein is ATP-dependent lipid A-core flippase of Sodalis glossinidius (strain morsitans).